The sequence spans 433 residues: uncharacterized protein (433 aa).

Positions 258-304 form a coiled coil; that stretch reads KNIKSKLLLELRQLKNNITNLQNKITKTMDNVKKIIEEIEQSKNKVT.

Belongs to the mimivirus R160 family.

It is found in the virion. This is an uncharacterized protein from Acanthamoeba polyphaga mimivirus (APMV).